The following is a 598-amino-acid chain: Chaperone protein DnaK (598 aa).

Threonine 175 bears the Phosphothreonine; by autocatalysis mark. The segment covering 571–591 has biased composition (low complexity); the sequence is AKSAAASSNKDDSLNNNSSSN. Residues 571 to 598 form a disordered region; it reads AKSAAASSNKDDSLNNNSSSNNDEETFE.

The protein belongs to the heat shock protein 70 family.

Functionally, acts as a chaperone. In Mycoplasmopsis agalactiae (strain NCTC 10123 / CIP 59.7 / PG2) (Mycoplasma agalactiae), this protein is Chaperone protein DnaK.